The sequence spans 280 residues: Trypsin zeta (280 aa).

The N-terminal stretch at 1–22 (MSSSWIVGLLAFLVSLVALTQG) is a signal peptide. Positions 23 to 38 (LPLLEDLDEKSVPDGR) are cleaved as a propeptide — activation peptide. A Peptidase S1 domain is found at 39-278 (IVGGYATDIA…LRPWIDAVLA (240 aa)). Cys72 and Cys88 are oxidised to a cystine. Residues His87 and Asp134 each act as charge relay system in the active site. Disulfide bonds link Cys198/Cys218 and Cys230/Cys254. The Charge relay system role is filled by Ser234.

This sequence belongs to the peptidase S1 family.

The protein localises to the secreted. It localises to the extracellular space. It carries out the reaction Preferential cleavage: Arg-|-Xaa, Lys-|-Xaa.. The protein is Trypsin zeta (zetaTry) of Drosophila melanogaster (Fruit fly).